A 383-amino-acid chain; its full sequence is 2-methylcitrate synthase 2 (383 aa).

Substrate contacts are provided by R73 and H195. H230 is an active-site residue. Residue 263 to 267 (VVMGF) coordinates CoA. H269 is a catalytic residue. Substrate is bound at residue R278. Residue D320 is part of the active site. Residues R345 and R364 each contribute to the substrate site.

Belongs to the citrate synthase family. As to quaternary structure, homodimer.

The catalysed reaction is propanoyl-CoA + oxaloacetate + H2O = (2S,3S)-2-methylcitrate + CoA + H(+). The enzyme catalyses oxaloacetate + acetyl-CoA + H2O = citrate + CoA + H(+). Its pathway is organic acid metabolism; propanoate degradation. It participates in carbohydrate metabolism; tricarboxylic acid cycle; isocitrate from oxaloacetate: step 1/2. Its function is as follows. Involved in the catabolism of short chain fatty acids (SCFA) via the tricarboxylic acid (TCA)(acetyl degradation route) and via the 2-methylcitrate cycle I (propionate degradation route). Catalyzes the Claisen condensation of propionyl-CoA and oxaloacetate (OAA) to yield 2-methylcitrate (2-MC) and CoA. Also catalyzes the condensation of oxaloacetate with acetyl-CoA but with a lower specificity. This Corynebacterium glutamicum (strain ATCC 13032 / DSM 20300 / JCM 1318 / BCRC 11384 / CCUG 27702 / LMG 3730 / NBRC 12168 / NCIMB 10025 / NRRL B-2784 / 534) protein is 2-methylcitrate synthase 2 (prpC2).